A 355-amino-acid polypeptide reads, in one-letter code: Probable dual-specificity RNA methyltransferase RlmN 1 (355 aa).

E91 acts as the Proton acceptor in catalysis. The Radical SAM core domain occupies 99 to 336 (RADRAAGCLS…THLRRSRGPD (238 aa)). Cysteines 106 and 341 form a disulfide. Residues C113, C117, and C120 each coordinate [4Fe-4S] cluster. Residues 163–164 (GE), S195, 218–220 (SLH), and N294 contribute to the S-adenosyl-L-methionine site. The S-methylcysteine intermediate role is filled by C341.

The protein belongs to the radical SAM superfamily. RlmN family. [4Fe-4S] cluster serves as cofactor.

The protein resides in the cytoplasm. It carries out the reaction adenosine(2503) in 23S rRNA + 2 reduced [2Fe-2S]-[ferredoxin] + 2 S-adenosyl-L-methionine = 2-methyladenosine(2503) in 23S rRNA + 5'-deoxyadenosine + L-methionine + 2 oxidized [2Fe-2S]-[ferredoxin] + S-adenosyl-L-homocysteine. The enzyme catalyses adenosine(37) in tRNA + 2 reduced [2Fe-2S]-[ferredoxin] + 2 S-adenosyl-L-methionine = 2-methyladenosine(37) in tRNA + 5'-deoxyadenosine + L-methionine + 2 oxidized [2Fe-2S]-[ferredoxin] + S-adenosyl-L-homocysteine. Functionally, specifically methylates position 2 of adenine 2503 in 23S rRNA and position 2 of adenine 37 in tRNAs. In Opitutus terrae (strain DSM 11246 / JCM 15787 / PB90-1), this protein is Probable dual-specificity RNA methyltransferase RlmN 1.